The sequence spans 556 residues: Single-strand DNA-binding protein (556 aa).

2 disordered regions span residues 1 to 95 and 527 to 556; these read MDPK…SEVE and FVRP…VNSL. Polar residues-rich tracts occupy residues 10-25 and 36-51; these read ENIT…TSDF and VNST…GSQE. 2 stretches are compositionally biased toward basic and acidic residues: residues 52–73 and 539–548; these read TPEH…RLDA and DSRRTYESRP.

In terms of assembly, interacts with host VIP2 that promotes T-DNA integration into the host genome. Forms a complex made of virE2 and host proteins VIP1 and VBF. Forms heterodimers with the chaperone protein virE1 that prevent virE2 anarchic homopolymerization. Interacts with A.thaliana VIP1 that mediates its translocation to the host nucleus. Forms a complex made of VirE2, host VIP1 and VIP2 and single-stranded DNA (ssDNA).

It is found in the secreted. The protein localises to the host nucleus. Involved in DNA transformation; mediates the nuclear uptake of single-stranded DNA copies of the transferred DNA (T-DNA) element. Binds single-stranded but not double-stranded DNA regardless of nucleotide sequence composition. This is Single-strand DNA-binding protein (virE2) from Agrobacterium fabrum (strain C58 / ATCC 33970) (Agrobacterium tumefaciens (strain C58)).